The following is a 436-amino-acid chain: MFDSTLNPLWQRYILAVQEEVKPALGCTEPISLALAAAVAAAELEGPVERVEAWVSPNLMKNGLGVTVPGTGMVGLPIAAALGALGGNANAGLEVLKDATAQAIADAKALLAAGKVSVKIQEPCNEILFSRAKVWNGEKWACVTIVGGHTNIVHIETHNGVVFTHQACVAEGEQESPLTVLSRTTLAEILKFVNEVPFAAIRFILDSAKLNCALSQEGLSGKWGLHIGATLEKQCERGLLAKDLSSSIVIRTSAASDARMGGATLPAMSNSGSGNQGITAIMPVVVVAEHFGADDERLARALMLSHLSAIYIHNQLPRLSALCAATTAAMGAAAGMAWLVDGRYETISMAISSMIGDVSGMICDGASNSCAMKVSTSASAAWKAVLMALDDTAVTGNEGIVAHDVEQSIANLCALASHSMQQTDRQIIEIMASKAR.

The protein belongs to the UPF0597 family.

In Shigella flexneri serotype 5b (strain 8401), this protein is UPF0597 protein YhaM.